The following is a 209-amino-acid chain: Protein GrpE (209 aa).

Composition is skewed to basic and acidic residues over residues 1-16 and 34-44; these read MKKSTKKESTHSKEES and KAGEKTAEPEK. Residues 1–61 form a disordered region; that stretch reads MKKSTKKEST…EKSPEAACRE (61 aa).

Belongs to the GrpE family. Homodimer.

It localises to the cytoplasm. Functionally, participates actively in the response to hyperosmotic and heat shock by preventing the aggregation of stress-denatured proteins, in association with DnaK and GrpE. It is the nucleotide exchange factor for DnaK and may function as a thermosensor. Unfolded proteins bind initially to DnaJ; upon interaction with the DnaJ-bound protein, DnaK hydrolyzes its bound ATP, resulting in the formation of a stable complex. GrpE releases ADP from DnaK; ATP binding to DnaK triggers the release of the substrate protein, thus completing the reaction cycle. Several rounds of ATP-dependent interactions between DnaJ, DnaK and GrpE are required for fully efficient folding. In Methanosarcina acetivorans (strain ATCC 35395 / DSM 2834 / JCM 12185 / C2A), this protein is Protein GrpE.